The primary structure comprises 553 residues: Putative transport protein YidE (553 aa).

5 helical membrane-spanning segments follow: residues 4-24, 28-48, 65-85, 95-115, and 158-178; these read IALT…IGNI, GVGF…HFVD, FGLI…FFAS, LFAV…HKIF, and MSYA…MWLM. RCK C-terminal domains lie at 192–276 and 279–361; these read KHES…VIGK and DTSL…VVGN. 5 helical membrane-spanning segments follow: residues 371 to 391, 403 to 425, 437 to 457, 464 to 484, and 533 to 553; these read MLPV…PLFV, AGGP…LYWF, LGIV…FVNT, LSWI…VGLL, and LVMF…WGIG.

The protein belongs to the AAE transporter (TC 2.A.81) family. YidE subfamily.

Its subcellular location is the cell membrane. The chain is Putative transport protein YidE from Salmonella arizonae (strain ATCC BAA-731 / CDC346-86 / RSK2980).